Here is a 227-residue protein sequence, read N- to C-terminus: (S)-2-haloacid dehalogenase 1 (227 aa).

The Nucleophile role is filled by Asp10. An (S)-2-haloacid is bound by residues 11 to 12 (AY), Arg41, and 118 to 119 (SN). Residues 175–180 (SSNAWD) form an important for catalytic activity region.

The protein belongs to the HAD-like hydrolase superfamily. S-2-haloalkanoic acid dehalogenase family.

The enzyme catalyses an (S)-2-haloacid + H2O = a (2R)-2-hydroxycarboxylate + a halide anion + H(+). It carries out the reaction (S)-2-chloropropanoate + H2O = (R)-lactate + chloride + H(+). Its function is as follows. Catalyzes the hydrolytic dehalogenation of small (S)-2-haloalkanoic acids to yield the corresponding (R)-2-hydroxyalkanoic acids. Acts on acids of short chain lengths, C(2) to C(4), with inversion of configuration at C-2. Active with 2-halogenated carboxylic acids and converts only the S-isomer (or L-isomer) of 2-chloropropionic acid with inversion of configuration to produce R-lactate (or D-isomer). The chain is (S)-2-haloacid dehalogenase 1 from Pseudomonas sp. (strain CBS-3).